Consider the following 94-residue polypeptide: Alpha-galactosyl-binding lectin (94 aa).

Homodimer. In terms of processing, contains three disulfide bonds.

Alpha-galactosyl-binding lectin with preference for galactose-alpha-1,4-galactose. In Lyophyllum decastes (Fried chicken mushroom), this protein is Alpha-galactosyl-binding lectin.